The sequence spans 367 residues: F-box only protein 25 (367 aa).

The segment at 1-83 (MPFLGQDWRS…NDTNTQSFYR (83 aa)) is interaction with beta-actin. The region spanning 226–274 (LTLSDLPLHMLNNILYRFSDGWDIITLGQVTPTLYMLSEDRQLWKKLCQ) is the F-box domain.

In terms of assembly, part of a SCF (SKP1-cullin-F-box) protein ligase complex consisting of FBXO25, SKP1, CUL1 and RBX1. Interacts directly with SKP1 and CUL1. Interacts (via C-terminus) with beta-actin (via N-terminus). Expressed in all brain tissue observed.

It localises to the nucleus. The protein operates within protein modification; protein ubiquitination. In terms of biological role, substrate-recognition component of the SCF (SKP1-CUL1-F-box protein)-type E3 ubiquitin ligase complex. May play a role in accumulation of expanded polyglutamine (polyQ) protein huntingtin (HTT). The sequence is that of F-box only protein 25 (FBXO25) from Homo sapiens (Human).